A 172-amino-acid polypeptide reads, in one-letter code: 3-hydroxydecanoyl-[acyl-carrier-protein] dehydratase (172 aa).

H71 is a catalytic residue.

Belongs to the thioester dehydratase family. FabA subfamily. Homodimer.

It localises to the cytoplasm. The catalysed reaction is a (3R)-hydroxyacyl-[ACP] = a (2E)-enoyl-[ACP] + H2O. It catalyses the reaction (3R)-hydroxydecanoyl-[ACP] = (2E)-decenoyl-[ACP] + H2O. It carries out the reaction (2E)-decenoyl-[ACP] = (3Z)-decenoyl-[ACP]. It participates in lipid metabolism; fatty acid biosynthesis. Necessary for the introduction of cis unsaturation into fatty acids. Catalyzes the dehydration of (3R)-3-hydroxydecanoyl-ACP to E-(2)-decenoyl-ACP and then its isomerization to Z-(3)-decenoyl-ACP. Can catalyze the dehydratase reaction for beta-hydroxyacyl-ACPs with saturated chain lengths up to 16:0, being most active on intermediate chain length. This is 3-hydroxydecanoyl-[acyl-carrier-protein] dehydratase from Brucella ovis (strain ATCC 25840 / 63/290 / NCTC 10512).